We begin with the raw amino-acid sequence, 517 residues long: Cytochrome P450 monooxygenase sdnE (517 aa).

A helical transmembrane segment spans residues 4–24; it reads SSILQTLAVLYVLYLLGLIIY. Asparagine 111 carries an N-linked (GlcNAc...) asparagine glycan. Residues 219–239 form a helical membrane-spanning segment; sequence FPVVFIILGLSPRAMLKLVVP. A heme-binding site is contributed by cysteine 456.

It belongs to the cytochrome P450 family. It depends on heme as a cofactor.

Its subcellular location is the membrane. The protein operates within antibiotic biosynthesis. In terms of biological role, cytochrome P450 monooxygenase; part of the gene cluster that mediates the biosynthesis of sordarin and hypoxysordarin, glycoside antibiotics with a unique tetracyclic diterpene aglycone structure. First, the geranylgeranyl diphosphate synthase sdnC constructs GGDP from farnesyl diphosphate and isopentenyl diphosphate. The diterpene cyclase sdnA then catalyzes the cyclization of GGDP to afford cycloaraneosene. Cycloaraneosene is then hydroxylated four times by the putative cytochrome P450 monooxygenases sdnB, sdnE, sdnF and sdnH to give a hydroxylated cycloaraneosene derivative such as cycloaraneosene-8,9,13,19-tetraol. Although the order of the hydroxylations is unclear, at least C8, C9 and C13 of the cycloaraneosene skeleton are hydroxylated before the sordaricin formation. Dehydration of the 13-hydroxy group of the hydroxylated cycloaraneosene derivative might be catalyzed by an unassigned hypothetical protein such as sdnG and sdnP to construct the cyclopentadiene moiety. The FAD-dependent oxidoreductase sdnN is proposed to catalyze the oxidation at C9 of the hydroxylated cycloaraneosene derivative and also catalyze the Baeyer-Villiger oxidation to give the lactone intermediate. The presumed lactone intermediate would be hydrolyzed to give an acrolein moiety and a carboxylate moiety. Then, [4+2]cycloaddition would occur between the acrolein moiety and the cyclopentadiene moiety to give sordaricin. SdnN might also be involved in the [4+2]cycloaddition after the hypothesized oxidation to accommodate the oxidized product and prompt the [4+2]cycloaddition. GDP-6-deoxy-D-altrose may be biosynthesized from GDP-D-mannose by the putative GDP-mannose-4,6-dehydratase sdnI and the short-chain dehydrogenase sdnK. The glycosyltransferase sdnJ catalyzes the attachment of 6-deoxy-D-altrose onto the 19-hydroxy group of sordaricin to give 4'-O-demethylsordarin. The methyltransferase sdnD would complete the biosynthesis of sordarin. Sordarin can be further modified into hypoxysordarin. The unique acyl chain at the 3'-hydroxy group of hypoxysordarin would be constructed by an iterative type I PKS sdnO and the trans-acting polyketide methyltransferase sdnL. SdnL would be responsible for the introduction of an alpha-methyl group of the polyketide chain. Alternatively, the beta-lactamase-like protein sdnR might be responsible for the cleavage and transfer of the polyketide chain from the PKS sdnO to sordarin. Two putative cytochrome P450 monooxygenases, sdnQ and sdnT, might catalyze the epoxidations of the polyketide chain to complete the biosynthesis of hypoxysordarin. Transcriptional regulators sdnM and sdnS are presumably encoded for the transcriptional regulation of the expression of the sdn gene cluster. This Sordaria araneosa (Pleurage araneosa) protein is Cytochrome P450 monooxygenase sdnE.